A 387-amino-acid chain; its full sequence is Exodeoxyribonuclease 7 large subunit (387 aa).

Belongs to the XseA family. In terms of assembly, heterooligomer composed of large and small subunits.

It is found in the cytoplasm. It catalyses the reaction Exonucleolytic cleavage in either 5'- to 3'- or 3'- to 5'-direction to yield nucleoside 5'-phosphates.. Bidirectionally degrades single-stranded DNA into large acid-insoluble oligonucleotides, which are then degraded further into small acid-soluble oligonucleotides. The polypeptide is Exodeoxyribonuclease 7 large subunit (Campylobacter fetus subsp. fetus (strain 82-40)).